The sequence spans 310 residues: Mitochondrial citrate transporter F (310 aa).

Solcar repeat units lie at residues 23–108, 115–207, and 216–303; these read KKVH…LKNH, PPGL…FKRL, and DNMG…HKKL. 6 helical membrane passes run 29–49, 85–105, 122–142, 186–206, 222–242, and 275–296; these read FWFGGSASCFAAAVTHPLDLV, SAAILRQLTYSTTRFGIYEEL, IGMASASGFIGGMAGNPADVL, NSTRAVLMTTSQLASYDTFKR, FTASFMAGFVATTVCSPVDVI, and AFRGWVPSFIRLGPHTIATFIF.

It belongs to the mitochondrial carrier (TC 2.A.29) family.

Its subcellular location is the mitochondrion inner membrane. Mitochondrial transporter that does not mediate citrate export from mitochondria to cytoplasm. Its exact function has still to be determined. This chain is Mitochondrial citrate transporter F, found in Aspergillus niger (strain ATCC 1015 / CBS 113.46 / FGSC A1144 / LSHB Ac4 / NCTC 3858a / NRRL 328 / USDA 3528.7).